The sequence spans 290 residues: 33 kDa chaperonin (290 aa).

Disulfide bonds link Cys235/Cys237 and Cys268/Cys271.

This sequence belongs to the HSP33 family. Post-translationally, under oxidizing conditions two disulfide bonds are formed involving the reactive cysteines. Under reducing conditions zinc is bound to the reactive cysteines and the protein is inactive.

It localises to the cytoplasm. Redox regulated molecular chaperone. Protects both thermally unfolding and oxidatively damaged proteins from irreversible aggregation. Plays an important role in the bacterial defense system toward oxidative stress. In Streptococcus pyogenes serotype M18 (strain MGAS8232), this protein is 33 kDa chaperonin.